The following is a 492-amino-acid chain: Ketol-acid reductoisomerase (NADP(+)) (492 aa).

One can recognise a KARI N-terminal Rossmann domain in the interval 14–208 (LDQLGRCRFM…GGHKAGVLES (195 aa)). Residues 45-48 (CGAQ), Arg68, Arg76, Ser78, and 108-110 (DKQ) contribute to the NADP(+) site. His132 is a catalytic residue. NADP(+) is bound at residue Gly158. KARI C-terminal knotted domains follow at residues 209-344 (SFVA…NAPK) and 345-485 (YDGK…MTDM). Mg(2+) contacts are provided by Asp217, Glu221, Glu389, and Glu393. Ser414 contributes to the substrate binding site.

It belongs to the ketol-acid reductoisomerase family. Requires Mg(2+) as cofactor.

It catalyses the reaction (2R)-2,3-dihydroxy-3-methylbutanoate + NADP(+) = (2S)-2-acetolactate + NADPH + H(+). It carries out the reaction (2R,3R)-2,3-dihydroxy-3-methylpentanoate + NADP(+) = (S)-2-ethyl-2-hydroxy-3-oxobutanoate + NADPH + H(+). It functions in the pathway amino-acid biosynthesis; L-isoleucine biosynthesis; L-isoleucine from 2-oxobutanoate: step 2/4. It participates in amino-acid biosynthesis; L-valine biosynthesis; L-valine from pyruvate: step 2/4. In terms of biological role, involved in the biosynthesis of branched-chain amino acids (BCAA). Catalyzes an alkyl-migration followed by a ketol-acid reduction of (S)-2-acetolactate (S2AL) to yield (R)-2,3-dihydroxy-isovalerate. In the isomerase reaction, S2AL is rearranged via a Mg-dependent methyl migration to produce 3-hydroxy-3-methyl-2-ketobutyrate (HMKB). In the reductase reaction, this 2-ketoacid undergoes a metal-dependent reduction by NADPH to yield (R)-2,3-dihydroxy-isovalerate. This is Ketol-acid reductoisomerase (NADP(+)) from Haemophilus influenzae (strain PittGG).